Consider the following 306-residue polypeptide: Acetaldehyde dehydrogenase 3 (306 aa).

Cys131 (acyl-thioester intermediate) is an active-site residue. NAD(+)-binding positions include 162 to 170 (SVGPGTRKN) and Asn273.

The protein belongs to the acetaldehyde dehydrogenase family.

The enzyme catalyses acetaldehyde + NAD(+) + CoA = acetyl-CoA + NADH + H(+). The sequence is that of Acetaldehyde dehydrogenase 3 from Burkholderia lata (strain ATCC 17760 / DSM 23089 / LMG 22485 / NCIMB 9086 / R18194 / 383).